The following is a 254-amino-acid chain: Acetylglutamate kinase (254 aa).

Substrate is bound by residues 40–41, Arg62, and Asn154; that span reads GG. Residues 177–182 and 205–207 contribute to the ATP site; these read DVSGIL and IIT.

Belongs to the acetylglutamate kinase family. ArgB subfamily. As to quaternary structure, homodimer.

It localises to the cytoplasm. The catalysed reaction is N-acetyl-L-glutamate + ATP = N-acetyl-L-glutamyl 5-phosphate + ADP. It participates in amino-acid biosynthesis; L-arginine biosynthesis; N(2)-acetyl-L-ornithine from L-glutamate: step 2/4. Functionally, catalyzes the ATP-dependent phosphorylation of N-acetyl-L-glutamate. This is Acetylglutamate kinase from Yersinia enterocolitica serotype O:8 / biotype 1B (strain NCTC 13174 / 8081).